Here is a 250-residue protein sequence, read N- to C-terminus: Small ribosomal subunit protein uS3 (250 aa).

One can recognise a KH type-2 domain in the interval 39–107 (VRAALKKRLY…EVHLNIVEIR (69 aa)). Residues 215-250 (LDKRLATESGPAGEGGGRERGDRPDRGDRRDRRDRA) form a disordered region. Positions 230–250 (GGRERGDRPDRGDRRDRRDRA) are enriched in basic and acidic residues.

The protein belongs to the universal ribosomal protein uS3 family. In terms of assembly, part of the 30S ribosomal subunit. Forms a tight complex with proteins S10 and S14.

Binds the lower part of the 30S subunit head. Binds mRNA in the 70S ribosome, positioning it for translation. This Caulobacter vibrioides (strain ATCC 19089 / CIP 103742 / CB 15) (Caulobacter crescentus) protein is Small ribosomal subunit protein uS3.